Consider the following 477-residue polypeptide: uncharacterized protein (477 aa).

A helical membrane pass occupies residues 107-129 (VNFWSLSMACASVLALLGLVYLI).

The protein localises to the membrane. This is an uncharacterized protein from Treponema pallidum (strain Nichols).